A 114-amino-acid chain; its full sequence is Turripeptide OL22 (114 aa).

In terms of processing, contains 6 disulfide bonds. In terms of tissue distribution, expressed by the venom duct.

Its subcellular location is the secreted. Functionally, acts as a neurotoxin by inhibiting an ion channel. In Iotyrris olangoensis (Sea snail), this protein is Turripeptide OL22.